A 308-amino-acid polypeptide reads, in one-letter code: Phosphoribosylaminoimidazole-succinocarboxamide synthase (308 aa).

It belongs to the SAICAR synthetase family.

The catalysed reaction is 5-amino-1-(5-phospho-D-ribosyl)imidazole-4-carboxylate + L-aspartate + ATP = (2S)-2-[5-amino-1-(5-phospho-beta-D-ribosyl)imidazole-4-carboxamido]succinate + ADP + phosphate + 2 H(+). The protein operates within purine metabolism; IMP biosynthesis via de novo pathway; 5-amino-1-(5-phospho-D-ribosyl)imidazole-4-carboxamide from 5-amino-1-(5-phospho-D-ribosyl)imidazole-4-carboxylate: step 1/2. This is Phosphoribosylaminoimidazole-succinocarboxamide synthase from Xylella fastidiosa (strain 9a5c).